The sequence spans 262 residues: 27 kDa lipoprotein antigen (262 aa).

Positions 1-28 are cleaved as a signal peptide; sequence MSASCAVPRLTRFAVFAVAGATALSLSA. 2 stretches are compositionally biased toward low complexity: residues 28–57 and 148–158; these read ACGS…PSST and STPGGASSTPP. Disordered regions lie at residues 28-60 and 138-171; these read ACGS…TPNA and VNGT…KPAW. Residue cysteine 29 is the site of N-palmitoyl cysteine attachment. The S-diacylglycerol cysteine moiety is linked to residue cysteine 29.

It localises to the cell membrane. This Mycobacterium intracellulare protein is 27 kDa lipoprotein antigen (Mi43).